We begin with the raw amino-acid sequence, 729 residues long: MLYKGDTLYLDWLEDGIAELVFDAPGSVNKLDTATVASLGQALEVLEKQHDLKGLLLRSNKAAFIVGADITEFLSLFLVPEEQLSQWLHFANSVFNRLEDLPVPTLAAVNGYALGGGCECVLATDYRLATPDLRIGLPETKLGIMPGFGGSVRLPRMLGADSALEIIAAGKDVGAEHALKIGLVDGVVKQEKLIEGAIAVLRQAITGDLDWRAKRQPKLEPLKLSKIEAAMSFTIAKGMVAQTAGKHYPAPMTAVKTIEAAARFGREEALNLENKSFVPLAHTNEARALVGIFLNDQYVKGKAKKLTKDIETPKQAAVLGAGIMGGGIAYQSAWKGVPVIMKDINDKSLNLGMTEAAKLLNKQLERGKIDGLKLAGVISTIHPTLDYAGFDRVDVVVEAVVENPKVKKAVLAETEQKVRPETVLASNTSTIPIGELASALERPENFCGMHFFNPVHRMPLVEIIRGEKSSDETIAKVVAWASKMGKTPIVVNDCPGFFVNRVLFPYFAGFSQLLRDGADFRKVDKVMEKQFGWPMGPAYLLDVVGIDTAHHAQAVMAAGFPQRMQKEYRDAIDALFDASRFGQKNGLGFWRYKEDSKGKPKKEEDAAVDDLLASVSQPKRDFSDDEIIARMMIPMINEVVRCLEEGIIASPAEADMALVYGLGFPPFHGGAFRWLDTQGSAKYLDMAQQYQHLGPLYEVPEGLRNKARHNEPYYPPVEPARPVGSLKTA.

The enoyl-CoA hydratase/isomerase stretch occupies residues Met-1–Lys-189. A substrate-binding site is contributed by Asp-296. Residues Glu-311–Ala-729 form a 3-hydroxyacyl-CoA dehydrogenase region. Residues Met-324, Asp-343, Val-400 to Glu-402, Lys-407, and Ser-429 contribute to the NAD(+) site. Residue His-450 is the For 3-hydroxyacyl-CoA dehydrogenase activity of the active site. Asn-453 serves as a coordination point for NAD(+). Residues Asn-500 and Tyr-660 each contribute to the substrate site. The tract at residues Arg-708–Ala-729 is disordered.

The protein in the N-terminal section; belongs to the enoyl-CoA hydratase/isomerase family. This sequence in the C-terminal section; belongs to the 3-hydroxyacyl-CoA dehydrogenase family. Heterotetramer of two alpha chains (FadB) and two beta chains (FadA).

The catalysed reaction is a (3S)-3-hydroxyacyl-CoA + NAD(+) = a 3-oxoacyl-CoA + NADH + H(+). The enzyme catalyses a (3S)-3-hydroxyacyl-CoA = a (2E)-enoyl-CoA + H2O. It catalyses the reaction a 4-saturated-(3S)-3-hydroxyacyl-CoA = a (3E)-enoyl-CoA + H2O. It carries out the reaction (3S)-3-hydroxybutanoyl-CoA = (3R)-3-hydroxybutanoyl-CoA. The catalysed reaction is a (3Z)-enoyl-CoA = a 4-saturated (2E)-enoyl-CoA. The enzyme catalyses a (3E)-enoyl-CoA = a 4-saturated (2E)-enoyl-CoA. Its pathway is lipid metabolism; fatty acid beta-oxidation. Functionally, involved in the aerobic and anaerobic degradation of long-chain fatty acids via beta-oxidation cycle. Catalyzes the formation of 3-oxoacyl-CoA from enoyl-CoA via L-3-hydroxyacyl-CoA. It can also use D-3-hydroxyacyl-CoA and cis-3-enoyl-CoA as substrate. The sequence is that of Fatty acid oxidation complex subunit alpha from Salmonella choleraesuis (strain SC-B67).